The primary structure comprises 146 residues: 3-dehydroquinate dehydratase (146 aa).

The active-site Proton acceptor is the Tyr22. Positions 74, 80, and 87 each coordinate substrate. The active-site Proton donor is His100. Residues Leu101–Ser102 and Arg111 contribute to the substrate site.

The protein belongs to the type-II 3-dehydroquinase family. Homododecamer.

It carries out the reaction 3-dehydroquinate = 3-dehydroshikimate + H2O. The protein operates within metabolic intermediate biosynthesis; chorismate biosynthesis; chorismate from D-erythrose 4-phosphate and phosphoenolpyruvate: step 3/7. Catalyzes a trans-dehydration via an enolate intermediate. The protein is 3-dehydroquinate dehydratase of Clostridium beijerinckii (strain ATCC 51743 / NCIMB 8052) (Clostridium acetobutylicum).